The chain runs to 442 residues: 3-phosphoshikimate 1-carboxyvinyltransferase (442 aa).

The segment covering 1-11 (MQVSRPLTVSA) has biased composition (polar residues). Residues 1–25 (MQVSRPLTVSASPKGLSGRTRVPGD) are disordered. Residues Lys-26, Ser-27, and Arg-31 each coordinate 3-phosphoshikimate. A phosphoenolpyruvate-binding site is contributed by Lys-26. Phosphoenolpyruvate is bound by residues Gly-98 and Arg-126. 3-phosphoshikimate is bound by residues Ser-171, Gln-173, Asp-324, and Lys-351. Gln-173 is a phosphoenolpyruvate binding site. The active-site Proton acceptor is Asp-324. 2 residues coordinate phosphoenolpyruvate: Arg-355 and Arg-398.

It belongs to the EPSP synthase family. Monomer.

Its subcellular location is the cytoplasm. The catalysed reaction is 3-phosphoshikimate + phosphoenolpyruvate = 5-O-(1-carboxyvinyl)-3-phosphoshikimate + phosphate. It participates in metabolic intermediate biosynthesis; chorismate biosynthesis; chorismate from D-erythrose 4-phosphate and phosphoenolpyruvate: step 6/7. Its function is as follows. Catalyzes the transfer of the enolpyruvyl moiety of phosphoenolpyruvate (PEP) to the 5-hydroxyl of shikimate-3-phosphate (S3P) to produce enolpyruvyl shikimate-3-phosphate and inorganic phosphate. The protein is 3-phosphoshikimate 1-carboxyvinyltransferase of Gluconobacter oxydans (strain 621H) (Gluconobacter suboxydans).